A 182-amino-acid chain; its full sequence is Endoribonuclease YbeY (182 aa).

Zn(2+) contacts are provided by histidine 115, histidine 119, and histidine 125.

Belongs to the endoribonuclease YbeY family. Requires Zn(2+) as cofactor.

The protein resides in the cytoplasm. Functionally, single strand-specific metallo-endoribonuclease involved in late-stage 70S ribosome quality control and in maturation of the 3' terminus of the 16S rRNA. This is Endoribonuclease YbeY from Bifidobacterium longum subsp. infantis (strain ATCC 15697 / DSM 20088 / JCM 1222 / NCTC 11817 / S12).